A 259-amino-acid chain; its full sequence is MRILVSNDDGVDAAGIRMLASVLREAGHEVTVVAPDRDRSGASNSLTLDLPIRLKRIDHYTVSVAGTPTDCVHLALTGLLEFEPDIVVSGINNAANLGDDVIYSGTVSAAMEGRFLGLPAVAVSLVTRNHDPKHFETAARAAVEIVARLKADPLPADTILNVNVPDLPWNEVKGFEVTRLGNRHRAEGCIAQKDPRGNEVYWIGPAGREQDSGPGTDFHAVRTGHISITPIQVDLTRYQALEKVASWVGGLSAALDQPA.

Positions 8, 9, 40, and 92 each coordinate a divalent metal cation.

The protein belongs to the SurE nucleotidase family. A divalent metal cation is required as a cofactor.

The protein resides in the cytoplasm. It carries out the reaction a ribonucleoside 5'-phosphate + H2O = a ribonucleoside + phosphate. Its function is as follows. Nucleotidase that shows phosphatase activity on nucleoside 5'-monophosphates. This chain is 5'-nucleotidase SurE, found in Stenotrophomonas maltophilia (strain K279a).